The chain runs to 785 residues: Endonuclease MutS2 (785 aa).

335–342 (GPNTGGKT) is a binding site for ATP. The Smr domain occupies 710 to 785 (LDLRGERYED…GNGVTIVEFK (76 aa)).

This sequence belongs to the DNA mismatch repair MutS family. MutS2 subfamily. In terms of assembly, homodimer. Binds to stalled ribosomes, contacting rRNA.

Its function is as follows. Endonuclease that is involved in the suppression of homologous recombination and thus may have a key role in the control of bacterial genetic diversity. Functionally, acts as a ribosome collision sensor, splitting the ribosome into its 2 subunits. Detects stalled/collided 70S ribosomes which it binds and splits by an ATP-hydrolysis driven conformational change. Acts upstream of the ribosome quality control system (RQC), a ribosome-associated complex that mediates the extraction of incompletely synthesized nascent chains from stalled ribosomes and their subsequent degradation. Probably generates substrates for RQC. The protein is Endonuclease MutS2 of Listeria monocytogenes serotype 4b (strain F2365).